A 314-amino-acid polypeptide reads, in one-letter code: tRNA dimethylallyltransferase (314 aa).

Position 9–16 (9–16 (GPTAVGKT)) interacts with ATP. 11–16 (TAVGKT) contacts substrate. Residues 34–37 (DSMQ) form an interaction with substrate tRNA region.

The protein belongs to the IPP transferase family. In terms of assembly, monomer. It depends on Mg(2+) as a cofactor.

The enzyme catalyses adenosine(37) in tRNA + dimethylallyl diphosphate = N(6)-dimethylallyladenosine(37) in tRNA + diphosphate. Catalyzes the transfer of a dimethylallyl group onto the adenine at position 37 in tRNAs that read codons beginning with uridine, leading to the formation of N6-(dimethylallyl)adenosine (i(6)A). In Clostridium tetani (strain Massachusetts / E88), this protein is tRNA dimethylallyltransferase.